The chain runs to 322 residues: Cytochrome c biogenesis protein CcsA (322 aa).

Transmembrane regions (helical) follow at residues 9-29 (ILTH…LITL), 44-64 (GMIT…IFLG), 71-91 (LYES…VPYF), 97-117 (FLSA…TSGL), 143-163 (MILG…FLVI), 225-245 (IISI…VWAN), 254-274 (WDPK…YFHI), and 286-306 (AIVA…VNLL).

It belongs to the CcmF/CycK/Ccl1/NrfE/CcsA family. As to quaternary structure, may interact with Ccs1.

The protein resides in the plastid. Its subcellular location is the chloroplast thylakoid membrane. Functionally, required during biogenesis of c-type cytochromes (cytochrome c6 and cytochrome f) at the step of heme attachment. The sequence is that of Cytochrome c biogenesis protein CcsA from Manihot esculenta (Cassava).